A 296-amino-acid polypeptide reads, in one-letter code: Maltose/maltodextrin transport system permease protein MalG (296 aa).

Topologically, residues 1–12 are cytoplasmic; the sequence is MAMVQGKSLKYR. The chain crosses the membrane as a helical span at residues 13-35; it reads VWATHIALWAFLSMIIFPLLMIV. Topologically, residues 36–88 are periplasmic; sequence AISFREGNFATGSLIPDNPSLEHWKLALGFSVTNADGSVTPPPFPVLTWLWNS. The ABC transmembrane type-1 domain maps to 85–281; it reads LWNSVKVAGI…LPITIVFLLA (197 aa). A helical transmembrane segment spans residues 89–111; it reads VKVAGITSILIVALSTTSAYAFA. Residues 112–123 are Cytoplasmic-facing; sequence RLRFKGKETILK. A helical membrane pass occupies residues 124–143; it reads AMMIFQMFPAVLALVALYAL. Residues 144 to 152 lie on the Periplasmic side of the membrane; sequence FDKLGQYIP. The chain crosses the membrane as a helical span at residues 153-175; it reads FLGLNTHGGLIFSYLGGIALHVW. The Cytoplasmic portion of the chain corresponds to 176 to 204; sequence TIKGYFETIDNSLEEAAALDGATPWQAFR. A helical transmembrane segment spans residues 205 to 227; the sequence is LVLLPLSVPILAVVFILSFIGVV. Residues 228–257 are Periplasmic-facing; sequence GEVPVASLLLSDVNSYTLAVGMQQYLYPQN. A helical membrane pass occupies residues 258 to 280; sequence YLWGDFAAAAVLSALPITIVFLL. At 281–296 the chain is on the cytoplasmic side; that stretch reads AQRWLVGGLTAGGVKG.

The protein belongs to the binding-protein-dependent transport system permease family. MalFG subfamily. The complex is composed of two ATP-binding proteins (MalK), two transmembrane proteins (MalG and MalF) and a solute-binding protein (MalE).

The protein resides in the cell inner membrane. Its function is as follows. Part of the ABC transporter complex MalEFGK involved in maltose/maltodextrin import. Probably responsible for the translocation of the substrate across the membrane. The sequence is that of Maltose/maltodextrin transport system permease protein MalG (malG) from Vibrio vulnificus (strain CMCP6).